We begin with the raw amino-acid sequence, 690 residues long: Glycine--tRNA ligase 1, mitochondrial (690 aa).

Residues 1 to 24 (MSFFNISRRFYSQIVKKSVKIKRM) constitute a mitochondrion transit peptide. The residue at position 25 (Ser-25) is an N-acetylserine. Ser-226 is subject to Phosphoserine. Glu-251 provides a ligand contact to glycine. ATP-binding positions include 283–285 (RNE) and 294–295 (RV). Residue Glu-302 coordinates glycine. 410-411 (EC) is an ATP binding site. 2 positions are modified to phosphoserine: Ser-476 and Ser-528. 531 to 533 (EPS) is a glycine binding site. Residue Arg-538 participates in ATP binding. Thr-689 is modified (phosphothreonine).

The protein belongs to the class-II aminoacyl-tRNA synthetase family. In terms of assembly, homodimer.

Its subcellular location is the cytoplasm. It localises to the mitochondrion matrix. It carries out the reaction tRNA(Gly) + glycine + ATP = glycyl-tRNA(Gly) + AMP + diphosphate. It catalyses the reaction 2 ATP + H(+) = P(1),P(4)-bis(5'-adenosyl) tetraphosphate + diphosphate. In terms of biological role, catalyzes the ATP-dependent ligation of glycine to the 3'-end of its cognate tRNA, via the formation of an aminoacyl-adenylate intermediate (Gly-AMP). Also produces diadenosine tetraphosphate (Ap4A), a universal pleiotropic signaling molecule needed for cell regulation pathways, by direct condensation of 2 ATPs. Thereby, may play a special role in Ap4A homeostasis. This chain is Glycine--tRNA ligase 1, mitochondrial (GRS1), found in Saccharomyces cerevisiae (strain ATCC 204508 / S288c) (Baker's yeast).